We begin with the raw amino-acid sequence, 326 residues long: H-2 class I histocompatibility antigen, Q8 alpha chain (326 aa).

A signal peptide spans 1-21; sequence MALTMLLLLVAAALTLIETRA. The segment at 22–111 is alpha-1; the sequence is GPHSLRYFHT…AQRYYNQSKG (90 aa). Over 22–305 the chain is Extracellular; sequence GPHSLRYFHT…EPPPSTVSNM (284 aa). A glycan (N-linked (GlcNAc...) asparagine) is linked at Asn-107. The interval 112–203 is alpha-2; the sequence is GSHTLQWMYG…QLRKETLLCT (92 aa). Cystine bridges form between Cys-122-Cys-185 and Cys-224-Cys-280. Positions 204–295 are alpha-3; sequence DPPKAHVTHH…GLPEPLTLRW (92 aa). The region spanning 206-294 is the Ig-like C1-type domain; that stretch reads PKAHVTHHPR…EGLPEPLTLR (89 aa). N-linked (GlcNAc...) asparagine glycosylation occurs at Asn-277. The connecting peptide stretch occupies residues 296–305; sequence EPPPSTVSNM. The helical transmembrane segment at 306 to 326 threads the bilayer; sequence ANVAILVVLVAWPSLELWWIL.

The protein belongs to the MHC class I family. As to quaternary structure, heterodimer of an alpha chain and a beta chain (beta-2-microglobulin).

Its subcellular location is the membrane. Functionally, involved in the presentation of foreign antigens to the immune system. This is H-2 class I histocompatibility antigen, Q8 alpha chain (H2-Q8) from Mus musculus (Mouse).